The following is a 64-amino-acid chain: Prokaryotic ubiquitin-like protein Pup (64 aa).

The disordered stretch occupies residues 1–32; the sequence is MNAKQTQIMGGGGRDEDNAEDSAQASGQVQIN. Residues 20 to 58 form an ARC ATPase binding region; sequence EDSAQASGQVQINTEGVDSLLDEIDGLLENNAEEFVRSY. The span at 21-32 shows a compositional bias: polar residues; sequence DSAQASGQVQIN. Residue glutamate 64 forms an Isoglutamyl lysine isopeptide (Glu-Lys) (interchain with K-? in acceptor proteins) linkage.

Belongs to the prokaryotic ubiquitin-like protein family. As to quaternary structure, strongly interacts with the proteasome-associated ATPase ARC through a hydrophobic interface; the interacting region of Pup lies in its C-terminal half. There is one Pup binding site per ARC hexamer ring.

The protein operates within protein degradation; proteasomal Pup-dependent pathway. Its function is as follows. Protein modifier that is covalently attached to lysine residues of substrate proteins, thereby targeting them for proteasomal degradation. The tagging system is termed pupylation. This is Prokaryotic ubiquitin-like protein Pup from Corynebacterium glutamicum (strain R).